We begin with the raw amino-acid sequence, 289 residues long: Bis(5'-nucleosyl)-tetraphosphatase, symmetrical (289 aa).

This sequence belongs to the Ap4A hydrolase family.

The enzyme catalyses P(1),P(4)-bis(5'-adenosyl) tetraphosphate + H2O = 2 ADP + 2 H(+). In terms of biological role, hydrolyzes diadenosine 5',5'''-P1,P4-tetraphosphate to yield ADP. The chain is Bis(5'-nucleosyl)-tetraphosphatase, symmetrical from Yersinia pestis bv. Antiqua (strain Antiqua).